Reading from the N-terminus, the 479-residue chain is Calcium-dependent mitochondrial ATP-magnesium/phosphate carrier protein 3 (479 aa).

The Mitochondrial intermembrane segment spans residues 1-208; sequence MESSKPKNRN…ISKHVKRSRL (208 aa). EF-hand domains lie at 33-68, 69-104, 105-135, and 136-171; these read EREI…LQIP, PEYK…KELE, LYRI…AGIE, and IDDE…YPHE. Residues aspartate 82, asparagine 84, aspartate 86, arginine 88, and glutamate 93 each contribute to the Ca(2+) site. Ca(2+) is bound by residues aspartate 149, aspartate 151, asparagine 153, threonine 155, and glutamate 160. 3 Solcar repeats span residues 203–286, 294–381, and 392–475; these read VKRS…LKPM, IGTS…LKDL, and PGPL…MKKN. A helical transmembrane segment spans residues 209–226; sequence LLAGGLAGAVSRTATAPL. Over 227–260 the chain is Mitochondrial matrix; that stretch reads DRLKVVLQVQRAHAGVLPTIKKIWREDKLMGFFR. The helical transmembrane segment at 261–280 threads the bilayer; it reads GNGLNVMKVAPESAIKFCAY. Over 281–303 the chain is Mitochondrial intermembrane; that stretch reads EMLKPMIGGEDGDIGTSGRLMAG. A helical transmembrane segment spans residues 304–317; that stretch reads GMAGALAQTAIYPM. The Mitochondrial matrix segment spans residues 318–355; it reads DLVKTRLQTCVSEGGKAPKLWKLTKDIWVREGPRAFYK. The chain crosses the membrane as a helical span at residues 356–375; that stretch reads GLFPSLLGIVPYAGIDLAAY. Residues 376-397 lie on the Mitochondrial intermembrane side of the membrane; that stretch reads ETLKDLSRTYILQDTEPGPLIQ. A helical transmembrane segment spans residues 398 to 415; that stretch reads LSCGMTSGALGASCVYPL. Over 416–449 the chain is Mitochondrial matrix; that stretch reads QVVRTRMQADSSKTTMKQEFMNTMKGEGLRGFYR. A helical transmembrane segment spans residues 450-469; that stretch reads GLLPNLLKVVPAASITYIVY. Residues 470–479 lie on the Mitochondrial intermembrane side of the membrane; the sequence is EAMKKNMALD.

This sequence belongs to the mitochondrial carrier (TC 2.A.29) family. In terms of tissue distribution, expressed in flowers, leaves, stems, roots and seedlings, mostly in seedlings.

The protein resides in the mitochondrion inner membrane. With respect to regulation, counter-exchange transport activity is saturable and inhibited by pyridoxal-5'-phosphate, EDTA and EGTA. Activated by calcium Ca(2+) and manganese Mn(2+) ions, and slightly by iron Fe(2+) and zinc Zn(2+) ions. Repressed by copper ions Cu(2+) and slightly by magnesium Mg(2+) ions. Magnesium Mg(2+) ions promotes slightly ATP uptake, ATP-Mg(2+) being exchanged with ATP(4-). In terms of biological role, calcium-dependent mitochondrial carrier protein that catalyzes the import of ATP co-transported with metal divalent cations across the mitochondrial inner membrane in exchange for phosphate (Pi). Can transport phosphate, AMP, ADP, ATP, adenosine 5'-phosphosulfate, sulfate and thiosulfate, and, to a lesser extent, other nucleotides. Binds calcium ions Ca(2+). Also mediates calcium uptake. The chain is Calcium-dependent mitochondrial ATP-magnesium/phosphate carrier protein 3 from Arabidopsis thaliana (Mouse-ear cress).